A 311-amino-acid polypeptide reads, in one-letter code: Ribonuclease HIII (311 aa).

The region spanning 95-311 is the RNase H type-2 domain; it reads MSIVGSDEVG…NTEKAFRLLK (217 aa). The a divalent metal cation site is built by Asp-101, Glu-102, and Asp-206.

This sequence belongs to the RNase HII family. RnhC subfamily. The cofactor is Mn(2+). It depends on Mg(2+) as a cofactor.

It localises to the cytoplasm. The catalysed reaction is Endonucleolytic cleavage to 5'-phosphomonoester.. In terms of biological role, endonuclease that specifically degrades the RNA of RNA-DNA hybrids. This Bacillus cereus (strain ZK / E33L) protein is Ribonuclease HIII.